The primary structure comprises 328 residues: WUSCHEL-related homeobox 6 (328 aa).

Residues Met-1–Gln-11 are compositionally biased toward polar residues. A disordered region spans residues Met-1–Pro-45. Residues Gly-23–Ser-33 show a composition bias toward gly residues. The homeobox; WUS-type DNA-binding region spans Pro-38–Gln-102.

This sequence belongs to the WUS homeobox family.

It localises to the nucleus. In terms of biological role, transcription factor which may be involved in developmental processes. The polypeptide is WUSCHEL-related homeobox 6 (WOX6) (Oryza sativa subsp. indica (Rice)).